The following is a 50-amino-acid chain: Sperm protamine P1 (50 aa).

2 cysteine pairs are disulfide-bonded: Cys7–Cys15 and Cys39–Cys47.

It belongs to the protamine P1 family. Cross-linked by interchain disulfide bonds around the DNA-helix. Testis.

The protein resides in the nucleus. It is found in the chromosome. In terms of biological role, protamines substitute for histones in the chromatin of sperm during the haploid phase of spermatogenesis. They compact sperm DNA into a highly condensed, stable and inactive complex. The sequence is that of Sperm protamine P1 (PRM1) from Oryctolagus cuniculus (Rabbit).